The chain runs to 613 residues: RNA polymerase-associated protein RTF1 homolog (613 aa).

Disordered regions lie at residues 1-90 (MSSS…DKAR) and 121-247 (QQLA…KDKI). Residues 55–68 (PAKKKTLTKRKRRA) show a composition bias toward basic residues. Residues 72–81 (SDDDQVDDDL) are compositionally biased toward acidic residues. The segment covering 167–176 (AAFHRPSDIN) has biased composition (basic and acidic residues). Residues 175 to 209 (INRKHKEKNAMDALKNKRKEIEKKNAKNEALSIDA) adopt a coiled-coil conformation. Low complexity predominate over residues 215–235 (SGSSSSSSSSESSRSSSSSRE). A compositionally biased stretch (basic and acidic residues) spans 236 to 247 (SSPERVSEKDKI). Positions 252–383 (VDGLSELRRA…KKQDIEKAIN (132 aa)) constitute a Plus3 domain. Residues 425 to 462 (RGDIREAEQIQTKIDEIERQADELEKERSKSISAIAFI) are a coiled coil. Disordered stretches follow at residues 485–549 (SQDD…KTDI) and 564–613 (LKDF…SSAV). Residues 510 to 521 (TLSASSSTTNLS) show a composition bias toward low complexity. Residues 569–586 (TPESSGNKRPSISSSKGV) are compositionally biased toward polar residues. Low complexity predominate over residues 602–613 (GSSTSAAPSSAV).

As to quaternary structure, component of the PAF1 complex which consists of at least cdc-73, ctr-9, leo-1, pafo-1 and rtfo-1.

The protein resides in the nucleus. In terms of biological role, component of the PAF1 complex which is a multifunctional complex involved in transcription initiation via genetic interactions with TATA-binding proteins, elongation and transcription-coupled histone modification. This Caenorhabditis elegans protein is RNA polymerase-associated protein RTF1 homolog.